The sequence spans 364 residues: MPKPAIKTAAKPATSSAGKRGKPITPKSVAKPQAAKPKTVSKPKVKPGEKKRLHPRNLHINGYDFPVLMVSYPKLKAFVRPTPYGDLSIDFADPSAVKTLNAALLQHHYGLAFWDIPKGALCPPIPGRVDYLHYLADLLFEGGKVKRAAAIRALDIGTGANGVYAILGHQVYDWQFVASDINPQSLTNVQRIIDNNPSLQGHLSLRRQQDDKAVFKGIIQASDRFELTLCNPPFHGSLKEASQGSLRKVRNLQLNRGEQPKATSATLNFGGQAAELWCQGGEKQFLATMIRESQAFAEQCLWFTSLVSKQENLKPCYQALEKLGVDTVKTIEMQQGNKITRLLAWSFHSQAKRLQWRNQIVSGT.

Low complexity predominate over residues 1–17 (MPKPAIKTAAKPATSSA). Residues 1 to 53 (MPKPAIKTAAKPATSSAGKRGKPITPKSVAKPQAAKPKTVSKPKVKPGEKKRL) are disordered. Residues 39–53 (TVSKPKVKPGEKKRL) are compositionally biased toward basic residues.

This sequence belongs to the methyltransferase superfamily. METTL16/RlmF family.

The protein resides in the cytoplasm. The enzyme catalyses adenosine(1618) in 23S rRNA + S-adenosyl-L-methionine = N(6)-methyladenosine(1618) in 23S rRNA + S-adenosyl-L-homocysteine + H(+). In terms of biological role, specifically methylates the adenine in position 1618 of 23S rRNA. This Shewanella sp. (strain MR-4) protein is Ribosomal RNA large subunit methyltransferase F.